The sequence spans 1299 residues: DNA-directed RNA polymerase subunit beta' (1299 aa).

4 residues coordinate Zn(2+): Cys60, Cys62, Cys75, and Cys78. Mg(2+) is bound by residues Asp535, Asp537, and Asp539. Cys877, Cys954, Cys961, and Cys964 together coordinate Zn(2+).

Belongs to the RNA polymerase beta' chain family. As to quaternary structure, the RNAP catalytic core consists of 2 alpha, 1 beta, 1 beta' and 1 omega subunit. When a sigma factor is associated with the core the holoenzyme is formed, which can initiate transcription. It depends on Mg(2+) as a cofactor. Zn(2+) is required as a cofactor.

The catalysed reaction is RNA(n) + a ribonucleoside 5'-triphosphate = RNA(n+1) + diphosphate. Functionally, DNA-dependent RNA polymerase catalyzes the transcription of DNA into RNA using the four ribonucleoside triphosphates as substrates. The polypeptide is DNA-directed RNA polymerase subunit beta' (Paenarthrobacter aurescens (strain TC1)).